The sequence spans 838 residues: V-type proton ATPase 116 kDa subunit a 1 (838 aa).

The Cytoplasmic segment spans residues 1 to 388; that stretch reads MGELFRSEEM…DAYGIGTYRE (388 aa). Residues 389 to 407 form a helical membrane-spanning segment; sequence INPAPYTIITFPFLFAVMF. At 408–409 the chain is on the vacuolar side; that stretch reads GD. A helical transmembrane segment spans residues 410 to 426; sequence FGHGILMTLIAIWMVLR. Topologically, residues 427 to 441 are cytoplasmic; it reads ESRILSQKSDNEMFS. A helical transmembrane segment spans residues 442 to 471; the sequence is TVFSGRYIILLMGLFSTYTGLIYNDCFSKS. Residues 472–535 are Vacuolar-facing; the sequence is LNMFGSSWSV…ANNKLAFLNS (64 aa). Residues 536-555 form a helical membrane-spanning segment; sequence FKMKMSVILGIIHMLFGVML. Residues 556–573 lie on the Cytoplasmic side of the membrane; that stretch reads SLLNHIYFKKPLNIYLGF. Residues 574–594 traverse the membrane as a helical segment; the sequence is IPEMIFMSSLFGYLVILIFYK. At 595–639 the chain is on the vacuolar side; sequence WTAYDAHTSKEAPSPLIHFINMFLFSYGDTSNKMLYRGQKGIQCF. Residues 640 to 659 traverse the membrane as a helical segment; it reads LVVVALLCVPWMLVAKPLVL. Topologically, residues 660-725 are cytoplasmic; it reads RHQYLRRKHL…DTVVYQAIHT (66 aa). The helical transmembrane segment at 726–750 threads the bilayer; that stretch reads IEYCLGCISNTASYLRLWALSLAHA. At 751–771 the chain is on the vacuolar side; it reads QLSEVLWTMVIHTGLSVRSLA. A helical membrane pass occupies residues 772 to 810; sequence GGFGLVFIFAAFATLTVAILLVMEGLSAFLHALRLHWIE. The Cytoplasmic portion of the chain corresponds to 811–838; that stretch reads FQNKFYTGTGFKFLPFSFDPIREGKFDD.

This sequence belongs to the V-ATPase 116 kDa subunit family. V-ATPase is a heteromultimeric enzyme made up of two complexes: the ATP-hydrolytic V1 complex and the proton translocation V0 complex. The V1 complex consists of three catalytic AB heterodimers that form a heterohexamer, three peripheral stalks each consisting of EG heterodimers, one central rotor including subunits D and F, and the regulatory subunits C and H. The proton translocation complex V0 consists of the proton transport subunit a, a ring of proteolipid subunits c9c'', rotary subunit d, subunits e and f, and two accessory subunits. As to expression, detected in brain (at protein level). Highest expression in brain, intermediate levels in kidney, and relatively low levels in bone and liver.

The protein resides in the cytoplasmic vesicle. It localises to the clathrin-coated vesicle membrane. The protein localises to the secretory vesicle. It is found in the synaptic vesicle membrane. Its subcellular location is the melanosome. Functionally, subunit of the V0 complex of vacuolar(H+)-ATPase (V-ATPase), a multisubunit enzyme composed of a peripheral complex (V1) that hydrolyzes ATP and a membrane integral complex (V0) that translocates protons. V-ATPase is responsible for acidifying and maintaining the pH of intracellular compartments and in some cell types, is targeted to the plasma membrane, where it is responsible for acidifying the extracellular environment. Required for assembly and activity of the vacuolar ATPase. The protein is V-type proton ATPase 116 kDa subunit a 1 (ATP6V0A1) of Gallus gallus (Chicken).